A 247-amino-acid polypeptide reads, in one-letter code: Ribosomal RNA small subunit methyltransferase G (247 aa).

S-adenosyl-L-methionine is bound by residues Gly84, Phe89, 136-137, and Arg155; that span reads AE.

It belongs to the methyltransferase superfamily. RNA methyltransferase RsmG family.

The protein resides in the cytoplasm. Functionally, specifically methylates the N7 position of a guanine in 16S rRNA. In Prochlorococcus marinus (strain MIT 9303), this protein is Ribosomal RNA small subunit methyltransferase G.